The chain runs to 2349 residues: Reducing polyketide synthase hmp8 (2349 aa).

Residues 9–435 (HVPVAIIGLA…GTNGHVVLEA (427 aa)) enclose the Ketosynthase family 3 (KS3) domain. Residues Cys182, His317, and His357 each act as for beta-ketoacyl synthase activity in the active site. Residues 551–856 (FVFTGQGAQW…SHNGIKNVAY (306 aa)) form a malonyl-CoA:ACP transacylase (MAT) domain region. The tract at residues 930–1066 (RSLIGAPVPM…GLVAIDYEES (137 aa)) is N-terminal hotdog fold. One can recognise a PKS/mFAS DH domain in the interval 930–1250 (RSLIGAPVPM…TSELDMDSGK (321 aa)). A dehydratase (DH) domain region spans residues 932–1244 (LIGAPVPMMA…SVKDFRTSEL (313 aa)). His962 (proton acceptor; for dehydratase activity) is an active-site residue. Residues 1094 to 1250 (PEHYAHDKFY…TSELDMDSGK (157 aa)) are C-terminal hotdog fold. The active-site Proton donor; for dehydratase activity is Asp1160. Positions 1641–1953 (GLLDTLKFVP…QGKHRGKMVL (313 aa)) are enoyl reductase (ER) domain. Residues 1977-2157 (ATYLFVGGLG…ISVNLGIMRD (181 aa)) are ketoreductase (KR) domain. In terms of domain architecture, Carrier spans 2267 to 2344 (EAAEIITDAL…SFAVKIAEKS (78 aa)). At Ser2304 the chain carries O-(pantetheine 4'-phosphoryl)serine.

Its pathway is secondary metabolite biosynthesis. Functionally, reducing polyketide synthase; part of the gene cluster that mediates the biosynthesis of hypothemycin, a resorcylic acid lactone (RAL) that irreversibly inhibits a subset of protein kinases with a conserved cysteine in the ATP binding site such as human ERK2. The first step is performed by both PKSs hmp3 and hmp8 and leads to the production of 7',8'-dehydrozearalenol (DHZ). The highly reducing PKS hpm8 synthesizes the reduced hexaketide (7S,11S,2E,8E)-7,11-dihydroxy-dodeca-2,8-dienoate, which is transferred downstream to the non-reducing PKS hpm3. Hpm3 then extends the reduced hexaketide to a nonaketide, after which regioselective cyclization and macrolactonization affords DHZ. The next step is the conversion of DHZ into aigialomycin C and is performed by the O-methyltransferase hmp5, the FAD-binding monooxygenase hmp7, and the cytochrome P450 monooxygenase hmp1. The wide substrate tolerance of the hmp5 and hmp7 implies that the reactions from DHZ to aigialomycin C can occur in any order. The steps from aigialomycin C to hypothemycin are less well established. The FAD-linked oxidoreductase hmp9 presumably catalyzes oxidation of the C-6' hydroxyl to a ketone. The timing of this oxidation is important, since the resulting enone functional group is a Michael acceptor that can react spontaneously with glutathione, an abundant metabolite in fungal cells. The glutathione S-transferase hmp2 catalyzes cis-trans isomerization of the 7',8' double bond with equilibrium favoring the trans isomer. The hpm6-encoded transporter might preferentially pump hypothemycin out of the cell relative to the trans isomer aigialomycin A. The cis-to-trans isomerization may be coupled with C-4' hydroxylation, since all known hypothemycin analogs containing the enone functional group also have hydroxyl groups at both C-4' and C-5'. The polypeptide is Reducing polyketide synthase hmp8 (Hypomyces subiculosus (Nectria subiculosa)).